The chain runs to 215 residues: Phosphoribosylglycinamide formyltransferase (215 aa).

Residues Arg-74, 99 to 102 (MRIL), and Asn-116 contribute to the (6R)-10-formyltetrahydrofolate site. His-118 functions as the Proton donor in the catalytic mechanism.

The protein belongs to the GART family.

The enzyme catalyses N(1)-(5-phospho-beta-D-ribosyl)glycinamide + (6R)-10-formyltetrahydrofolate = N(2)-formyl-N(1)-(5-phospho-beta-D-ribosyl)glycinamide + (6S)-5,6,7,8-tetrahydrofolate + H(+). The protein operates within purine metabolism; IMP biosynthesis via de novo pathway; N(2)-formyl-N(1)-(5-phospho-D-ribosyl)glycinamide from N(1)-(5-phospho-D-ribosyl)glycinamide (10-formyl THF route): step 1/1. Functionally, catalyzes the transfer of a formyl group from 10-formyltetrahydrofolate to 5-phospho-ribosyl-glycinamide (GAR), producing 5-phospho-ribosyl-N-formylglycinamide (FGAR) and tetrahydrofolate. This chain is Phosphoribosylglycinamide formyltransferase, found in Mycobacterium tuberculosis (strain CDC 1551 / Oshkosh).